A 1215-amino-acid polypeptide reads, in one-letter code: Inner capsid protein VP3 (1215 aa).

The tract at residues 1-81 (MPRRPRRNAK…RVDNDGDVIT (81 aa)) is disordered. A compositionally biased stretch (low complexity) spans 21-44 (LVAPAANASVSSTVNTTTSPTLAA). The C2H2-type zinc-finger motif lies at 118–141 (YRCNVCNAEFPSMSAMTEHLRTSH).

The protein belongs to the turreted BTV-fold inner capsid family. Homodecamer; each decamer is made up of two conformers of VP2, called VP2A and VP2B. 12 homodecamers assemble to form an icosahedral capsid. Interacts with VP6.

Its subcellular location is the virion. Functionally, inner capsid protein that self-assembles to form an icosahedral capsid with a T=2 symmetry, which consists of 120 copies of VP2, with channels at each of its five-fold vertices. This capsid constitutes the innermost concentric layer of the viral mature particle. In Ctenopharyngodon idella (Grass carp), this protein is Inner capsid protein VP3 (S3).